The sequence spans 83 residues: Small ribosomal subunit protein bS16 (83 aa).

This sequence belongs to the bacterial ribosomal protein bS16 family.

In Shewanella putrefaciens (strain CN-32 / ATCC BAA-453), this protein is Small ribosomal subunit protein bS16.